Consider the following 363-residue polypeptide: Uptake hydrogenase small subunit (363 aa).

Positions 1–46 form a signal peptide, tat-type signal; it reads MGAATETFYSVIRRQGITRRSFHKFCSLTATSLGLGPLAASRIANA. Residues Cys63, Cys66, Cys161, Cys195, His233, Cys236, Cys261, and Cys267 each coordinate [4Fe-4S] cluster. Cys276, Cys295, and Cys298 together coordinate [3Fe-4S] cluster.

This sequence belongs to the [NiFe]/[NiFeSe] hydrogenase small subunit family. In terms of assembly, heterodimer of a large and a small subunit. [4Fe-4S] cluster is required as a cofactor. Requires [3Fe-4S] cluster as cofactor. Predicted to be exported by the Tat system. The position of the signal peptide cleavage has not been experimentally proven.

It localises to the cell membrane. The catalysed reaction is H2 + A = AH2. This enzyme recycles the H(2) produced by nitrogenase to increase the production of ATP and to protect nitrogenase against inhibition or damage by O(2) under carbon- or phosphate-limited conditions. The protein is Uptake hydrogenase small subunit (hupA) of Bradyrhizobium diazoefficiens (strain JCM 10833 / BCRC 13528 / IAM 13628 / NBRC 14792 / USDA 110).